The sequence spans 840 residues: Protein translocase subunit SecA (840 aa).

ATP-binding positions include Gln-85, 103–107 (GEGKT), and Asp-492. The interval 787–821 (QRERVAKETGASHGGDSQEIKKKPVKKEPKVGRND) is disordered. Basic and acidic residues predominate over residues 802–819 (DSQEIKKKPVKKEPKVGR). The Zn(2+) site is built by Cys-823, Cys-825, Cys-834, and Cys-835.

Belongs to the SecA family. Monomer and homodimer. Part of the essential Sec protein translocation apparatus which comprises SecA, SecYEG and auxiliary proteins SecDF. Other proteins may also be involved. The cofactor is Zn(2+).

The protein localises to the cell membrane. The protein resides in the cytoplasm. The enzyme catalyses ATP + H2O + cellular proteinSide 1 = ADP + phosphate + cellular proteinSide 2.. Functionally, part of the Sec protein translocase complex. Interacts with the SecYEG preprotein conducting channel. Has a central role in coupling the hydrolysis of ATP to the transfer of proteins into and across the cell membrane, serving as an ATP-driven molecular motor driving the stepwise translocation of polypeptide chains across the membrane. The protein is Protein translocase subunit SecA of Clostridium perfringens (strain 13 / Type A).